The chain runs to 434 residues: Monodehydroascorbate reductase 1, peroxisomal (434 aa).

FAD contacts are provided by residues 13–16 (GGVS), Glu-40, Arg-47, Lys-52, Ile-95, and 146–147 (RE). NAD(+) contacts are provided by residues 171 to 177 (GGYIGLE), Glu-195, Arg-201, and Gly-260. 173–177 (YIGLE) lines the NADP(+) pocket. 2 residues coordinate NADP(+): Arg-201 and Gly-260. Asp-297 serves as a coordination point for FAD. 313–314 (EH) is an NAD(+) binding site. 313–314 (EH) provides a ligand contact to NADP(+). Val-315 is an FAD binding site. Residue Arg-319 participates in L-ascorbate binding. Residue Tyr-348 participates in FAD binding. Residue Tyr-348 participates in NAD(+) binding. Tyr-348 provides a ligand contact to NADP(+). Arg-350 serves as a coordination point for L-ascorbate. At Ser-416 the chain carries Phosphoserine.

The protein belongs to the FAD-dependent oxidoreductase family. It depends on FAD as a cofactor.

The protein resides in the peroxisome matrix. It carries out the reaction 2 monodehydro-L-ascorbate radical + NADH + H(+) = 2 L-ascorbate + NAD(+). Functionally, catalyzes the conversion of monodehydroascorbate to ascorbate, oxidizing NADH in the process. In Arabidopsis thaliana (Mouse-ear cress), this protein is Monodehydroascorbate reductase 1, peroxisomal.